Here is a 162-residue protein sequence, read N- to C-terminus: Chemoreceptor glutamine deamidase CheD (162 aa).

It belongs to the CheD family. As to quaternary structure, forms a complex with CheC.

It carries out the reaction L-glutaminyl-[protein] + H2O = L-glutamyl-[protein] + NH4(+). Functionally, deamidates glutamine residues to glutamate on methyl-accepting chemotaxis receptors (MCPs). CheD-mediated MCP deamidation is required for productive communication of the conformational signals of the chemoreceptors to the CheA kinase. This is Chemoreceptor glutamine deamidase CheD from Halalkalibacterium halodurans (strain ATCC BAA-125 / DSM 18197 / FERM 7344 / JCM 9153 / C-125) (Bacillus halodurans).